A 309-amino-acid chain; its full sequence is Transcriptional regulator HilD (309 aa).

In terms of domain architecture, HTH araC/xylS-type spans 209–306 (ERVYNIISSS…KTTPSTFIKM (98 aa)). DNA-binding regions (H-T-H motif) lie at residues 226 to 247 (TDVA…AEEG) and 273 to 296 (VNAV…KKYF).

The chain is Transcriptional regulator HilD (hilD) from Salmonella typhimurium (strain SL1344).